The following is a 319-amino-acid chain: Coproporphyrin III ferrochelatase 2 (319 aa).

Fe-coproporphyrin III-binding positions include tyrosine 13, arginine 30, 46–47, serine 54, and tyrosine 125; that span reads RY. Fe(2+)-binding residues include histidine 181 and glutamate 262.

This sequence belongs to the ferrochelatase family.

It localises to the cytoplasm. It carries out the reaction Fe-coproporphyrin III + 2 H(+) = coproporphyrin III + Fe(2+). It functions in the pathway porphyrin-containing compound metabolism; protoheme biosynthesis. Its function is as follows. Involved in coproporphyrin-dependent heme b biosynthesis. Catalyzes the insertion of ferrous iron into coproporphyrin III to form Fe-coproporphyrin III. This is Coproporphyrin III ferrochelatase 2 from Bacillus cereus (strain ATCC 14579 / DSM 31 / CCUG 7414 / JCM 2152 / NBRC 15305 / NCIMB 9373 / NCTC 2599 / NRRL B-3711).